A 155-amino-acid polypeptide reads, in one-letter code: Cell division protein SepF (155 aa).

Residues 16-35 are compositionally biased toward acidic residues; the sequence is TEDEEEDVETVEESEDVEEE. The interval 16 to 44 is disordered; the sequence is TEDEEEDVETVEESEDVEEEESKKPQFIQ.

This sequence belongs to the SepF family. Homodimer. Interacts with FtsZ.

It localises to the cytoplasm. Cell division protein that is part of the divisome complex and is recruited early to the Z-ring. Probably stimulates Z-ring formation, perhaps through the cross-linking of FtsZ protofilaments. Its function overlaps with FtsA. The sequence is that of Cell division protein SepF from Acetivibrio thermocellus (strain ATCC 27405 / DSM 1237 / JCM 9322 / NBRC 103400 / NCIMB 10682 / NRRL B-4536 / VPI 7372) (Clostridium thermocellum).